The primary structure comprises 329 residues: Pantothenate kinase (329 aa).

An ATP-binding site is contributed by 107–114 (GSVAVGKS).

The protein belongs to the prokaryotic pantothenate kinase family.

It is found in the cytoplasm. It carries out the reaction (R)-pantothenate + ATP = (R)-4'-phosphopantothenate + ADP + H(+). The protein operates within cofactor biosynthesis; coenzyme A biosynthesis; CoA from (R)-pantothenate: step 1/5. This chain is Pantothenate kinase, found in Streptomyces avermitilis (strain ATCC 31267 / DSM 46492 / JCM 5070 / NBRC 14893 / NCIMB 12804 / NRRL 8165 / MA-4680).